Reading from the N-terminus, the 270-residue chain is FKBP-type peptidyl-prolyl cis-trans isomerase FkpA (270 aa).

An N-terminal signal peptide occupies residues 1 to 25 (MKSLFKVTLLATTMAVALHAPITFA). The PPIase FKBP-type domain occupies 164-249 (SDTVVVNYKG…VFDVELLDVK (86 aa)).

Belongs to the FKBP-type PPIase family.

It is found in the periplasm. The catalysed reaction is [protein]-peptidylproline (omega=180) = [protein]-peptidylproline (omega=0). In terms of biological role, PPIases accelerate the folding of proteins. It catalyzes the cis-trans isomerization of proline imidic peptide bonds in oligopeptides. In Escherichia coli (strain K12), this protein is FKBP-type peptidyl-prolyl cis-trans isomerase FkpA (fkpA).